Here is a 500-residue protein sequence, read N- to C-terminus: Mucin-like protein 3 (500 aa).

An N-terminal signal peptide occupies residues Met-1–Ala-27. At Gly-28–Ala-429 the chain is on the extracellular side. 2 disordered regions span residues Thr-55–Pro-198 and Glu-275–Ser-324. Residues Ala-58–Asp-71 are compositionally biased toward basic and acidic residues. A compositionally biased stretch (polar residues) spans Thr-76–Arg-89. Asn-108 carries an N-linked (GlcNAc...) asparagine glycan. Basic and acidic residues-rich tracts occupy residues Val-111–Leu-123 and Ala-132–Arg-142. An N-linked (GlcNAc...) asparagine glycan is attached at Asn-148. 3 stretches are compositionally biased toward polar residues: residues Pro-159 to Ser-178, Ser-279 to Gln-289, and Thr-298 to Ser-324. The chain crosses the membrane as a helical span at residues Ile-430 to Leu-450. Topologically, residues Val-451–Pro-500 are cytoplasmic.

It is found in the cell membrane. The protein localises to the cytoplasm. May modulate NF-kappaB signaling and play a role in cell growth. This chain is Mucin-like protein 3, found in Mus musculus (Mouse).